The following is a 308-amino-acid chain: MNQTTIKKSIACSGVGLHSGKTVRMVLHPAAEDTGIVFDIHTAQGVRRIAPEPQVVIATGLATTLGMDGASVATVEHLLAAIRGLEIDNITVEIEGGEVPIMDGSAASFVMLLRNAGIRRQTSARKVFRIARPVHYERDGKSIRALPYDGFRVEYRIEFPHPLIGRQTLSIDITPESFGEIAKARTFGFLREVEYLHSKGLALGGSLDNAIVLDDYSVLNPDGLRSPDEFVRHKVLDFVGDMAMMGVPLQGHFIVECSGHALNNGFLRMLEENASLYLEAVELPVAEQHPAALRPAARVATEGQPAIA.

Zn(2+) is bound by residues histidine 77, histidine 233, and aspartate 237. Histidine 260 (proton donor) is an active-site residue.

This sequence belongs to the LpxC family. The cofactor is Zn(2+).

The catalysed reaction is a UDP-3-O-[(3R)-3-hydroxyacyl]-N-acetyl-alpha-D-glucosamine + H2O = a UDP-3-O-[(3R)-3-hydroxyacyl]-alpha-D-glucosamine + acetate. The protein operates within glycolipid biosynthesis; lipid IV(A) biosynthesis; lipid IV(A) from (3R)-3-hydroxytetradecanoyl-[acyl-carrier-protein] and UDP-N-acetyl-alpha-D-glucosamine: step 2/6. Functionally, catalyzes the hydrolysis of UDP-3-O-myristoyl-N-acetylglucosamine to form UDP-3-O-myristoylglucosamine and acetate, the committed step in lipid A biosynthesis. This Nitratidesulfovibrio vulgaris (strain ATCC 29579 / DSM 644 / CCUG 34227 / NCIMB 8303 / VKM B-1760 / Hildenborough) (Desulfovibrio vulgaris) protein is UDP-3-O-acyl-N-acetylglucosamine deacetylase.